We begin with the raw amino-acid sequence, 149 residues long: Placenta growth factor (149 aa).

The first 18 residues, 1 to 18 (MPTVRLFTCFLQLLTGLV), serve as a signal peptide directing secretion. An N-linked (GlcNAc...) asparagine glycan is attached at Asn-33. Intrachain disulfides connect Cys-52/Cys-94, Cys-83/Cys-128, and Cys-87/Cys-130. The N-linked (GlcNAc...) asparagine glycan is linked to Asn-101.

It belongs to the PDGF/VEGF growth factor family. As to quaternary structure, antiparallel homodimer; disulfide-linked. Also found as heterodimer with VEGFA/VEGF.

Its subcellular location is the secreted. Its function is as follows. Growth factor active in angiogenesis and endothelial cell growth, stimulating their proliferation and migration. It binds to the receptor FLT1/VEGFR-1. Also promotes cell tumor growth. The sequence is that of Placenta growth factor (PGF) from Bos taurus (Bovine).